The chain runs to 137 residues: Nucleoside diphosphate kinase (137 aa).

ATP is bound by residues Lys9, Phe57, Arg85, Thr91, Arg102, and Asn112. His115 acts as the Pros-phosphohistidine intermediate in catalysis.

It belongs to the NDK family. Homotetramer. Requires Mg(2+) as cofactor.

Its subcellular location is the cytoplasm. The catalysed reaction is a 2'-deoxyribonucleoside 5'-diphosphate + ATP = a 2'-deoxyribonucleoside 5'-triphosphate + ADP. It catalyses the reaction a ribonucleoside 5'-diphosphate + ATP = a ribonucleoside 5'-triphosphate + ADP. Functionally, major role in the synthesis of nucleoside triphosphates other than ATP. The ATP gamma phosphate is transferred to the NDP beta phosphate via a ping-pong mechanism, using a phosphorylated active-site intermediate. The protein is Nucleoside diphosphate kinase of Leptospira borgpetersenii serovar Hardjo-bovis (strain L550).